A 221-amino-acid polypeptide reads, in one-letter code: N-(5'-phosphoribosyl)anthranilate isomerase (221 aa).

It belongs to the TrpF family.

It carries out the reaction N-(5-phospho-beta-D-ribosyl)anthranilate = 1-(2-carboxyphenylamino)-1-deoxy-D-ribulose 5-phosphate. It participates in amino-acid biosynthesis; L-tryptophan biosynthesis; L-tryptophan from chorismate: step 3/5. This chain is N-(5'-phosphoribosyl)anthranilate isomerase, found in Parabacteroides distasonis (strain ATCC 8503 / DSM 20701 / CIP 104284 / JCM 5825 / NCTC 11152).